A 514-amino-acid chain; its full sequence is F-box-like/WD repeat-containing protein TBL1XR1 (514 aa).

Residue Ser2 is modified to N-acetylserine. Residues 4–36 (SSDEVNFLVYRYLQESGFSHSAFTFGIESHISQ) enclose the LisH domain. The F-box-like domain maps to 41–86 (GALVPPAALISIIQKGLQYVEAEVSINEDGTLFDGRPIESLSLIDA). Lys102 carries the N6-acetyllysine modification. Position 119 is a phosphoserine (Ser119). Residues 120–135 (QQGSAKNGENTANGEE) are compositionally biased toward low complexity. The segment at 120 to 139 (QQGSAKNGENTANGEENGAH) is disordered. 8 WD repeats span residues 167–206 (GHES…TSGS), 223–262 (PSNK…ASTL), 264–303 (QHKG…AKQQ), 306–344 (FHSA…PIKT), 347–386 (GHTN…CVHD), 389–437 (AHNK…CIHT), 440–479 (KHQE…LVHS), and 481–513 (RGTG…LDLR). Lys277 is covalently cross-linked (Glycyl lysine isopeptide (Lys-Gly) (interchain with G-Cter in SUMO2)).

This sequence belongs to the WD repeat EBI family. In terms of assembly, component of the N-Cor repressor complex, at least composed of NCOR1, NCOR2, HDAC3, TBL1X, TBL1XR1, CORO2A and GPS2. Probable component of some E3 ubiquitin ligase complex. Interacts with histones H2B and H4. Interacts with MECP2; bridges interaction between MECP2 and NCOR1. Interacts with USP44. Widely expressed including the pituitary, hypothalamus, white and brown adipose tissue, muscle and liver.

Its subcellular location is the nucleus. Functionally, F-box-like protein involved in the recruitment of the ubiquitin/19S proteasome complex to nuclear receptor-regulated transcription units. Plays an essential role in transcription activation mediated by nuclear receptors. Probably acts as integral component of the N-Cor corepressor complex that mediates the recruitment of the 19S proteasome complex, leading to the subsequent proteasomal degradation of N-Cor complex, thereby allowing cofactor exchange, and transcription activation. The protein is F-box-like/WD repeat-containing protein TBL1XR1 (TBL1XR1) of Homo sapiens (Human).